The chain runs to 498 residues: Mitogen-activated protein kinase 15 (498 aa).

The Protein kinase domain occupies 13-304 (YKIEEVIGKG…AEEALADPYF (292 aa)). ATP contacts are provided by residues 19-27 (IGKGSYGVV) and Lys-42. Residue Asp-139 is the Proton acceptor of the active site. Thr-175 bears the Phosphothreonine mark. Positions 175–177 (TDY) match the TXY motif. Tyr-177 bears the Phosphotyrosine mark. Disordered regions lie at residues 388-411 (STAA…SDDR) and 470-498 (STAE…GSYP). Polar residues predominate over residues 486-498 (LATNTVSPRGSYP).

Belongs to the protein kinase superfamily. CMGC Ser/Thr protein kinase family. MAP kinase subfamily. In terms of processing, dually phosphorylated on Thr-175 and Tyr-177, which activates the enzyme.

The enzyme catalyses L-seryl-[protein] + ATP = O-phospho-L-seryl-[protein] + ADP + H(+). It carries out the reaction L-threonyl-[protein] + ATP = O-phospho-L-threonyl-[protein] + ADP + H(+). Its activity is regulated as follows. Activated by threonine and tyrosine phosphorylation. The chain is Mitogen-activated protein kinase 15 (MPK15) from Oryza sativa subsp. japonica (Rice).